The primary structure comprises 906 residues: UPF0182 protein CA_C0010 (906 aa).

Helical transmembrane passes span 7–29, 47–69, 96–118, 153–175, 208–230, 250–272, and 279–301; these read IVTI…DFII, LAAI…WFYY, VAIV…VYWY, LYGV…YIVL, FAII…SFNL, LVFY…TSII, and IFVS…EIVQ. The span at 842 to 862 shows a compositional bias: low complexity; it reads NSSNNQSETRTETGGTSTDSS. The interval 842-875 is disordered; the sequence is NSSNNQSETRTETGGTSTDSSNNKDKLKQAQDLY.

This sequence belongs to the UPF0182 family.

The protein localises to the cell membrane. The polypeptide is UPF0182 protein CA_C0010 (Clostridium acetobutylicum (strain ATCC 824 / DSM 792 / JCM 1419 / IAM 19013 / LMG 5710 / NBRC 13948 / NRRL B-527 / VKM B-1787 / 2291 / W)).